We begin with the raw amino-acid sequence, 1605 residues long: Sister chromatid cohesion protein PDS5 homolog A (1605 aa).

HEAT repeat units lie at residues 50-89 (KSIQ…ITAP), 96-136 (NIMK…YRSC), 146-183 (DLVK…EESE), 184-221 (DVQE…HCAP), 261-298 (QALS…LPGR), 302-339 (EEFD…SDPL), 341-378 (AEAS…SALT), 380-416 (IPVD…VYCL), 552-591 (ANIW…LYDF), 644-681 (SLFD…TIRE), 723-758 (KSLS…IAMP), 821-860 (AGVD…AAKA), 961-1000 (LYPH…QLYL), and 1050-1088 (HAIC…KPSE). Disordered regions lie at residues 1155–1182 (LRAQ…KNDV) and 1203–1262 (ESSN…PKVQ). The segment covering 1211–1225 (SPSERAEICQRDQKG) has biased composition (basic and acidic residues). Positions 1226–1233 (NKRNVGDA) match the Nuclear localization signal 1 motif. At S1274 the chain carries Phosphoserine. Residues 1279–1295 (NVSLDSHDENSDQEKML) are compositionally biased toward basic and acidic residues. Disordered stretches follow at residues 1279-1307 (NVSL…KKSL), 1324-1353 (ERSR…SGLA), and 1423-1605 (GKTA…RTAI). S1299 carries the post-translational modification Phosphoserine. 2 stretches are compositionally biased toward basic residues: residues 1425–1442 (TAKK…KRSS) and 1464–1476 (KGKR…LKQL). A Nuclear localization signal 2 motif is present at residues 1426 to 1433 (AKKSRTSK). Basic and acidic residues-rich tracts occupy residues 1477–1495 (HPKD…VESR), 1514–1527 (GEEK…SLKE), and 1534–1574 (VVNK…NEME). Residues S1524, S1562, and S1584 each carry the phosphoserine modification. Over residues 1575–1585 (REAEENAETSD) the composition is skewed to acidic residues. T1588 bears the Phosphothreonine mark.

Belongs to the PDS5 family. In terms of assembly, interacts with the cohesin complex. Interacts with DEK3.

The protein localises to the nucleus. Cohesin cofactor dispensable during the meiotic division but playing an important role in DNA repair by homologous recombination (HR) probably by helping SMC5/SMC6 complex. Regulator of sister chromatid cohesion in mitosis which may stabilize cohesin complex association with chromatin. May couple sister chromatid cohesion during mitosis to DNA replication. Cohesion ensures that chromosome partitioning is accurate in both meiotic and mitotic cells and plays an important role in DNA repair. This is Sister chromatid cohesion protein PDS5 homolog A from Arabidopsis thaliana (Mouse-ear cress).